Here is a 277-residue protein sequence, read N- to C-terminus: Collectin-10 (277 aa).

An N-terminal signal peptide occupies residues 1–27 (MNGFRVLLRSNLSMLLLLALLHFQSLG). N-linked (GlcNAc...) asparagine glycosylation occurs at Asn11. The segment at 41–103 (THTISPGPKG…IGKKGDKGEK (63 aa)) is disordered. The Collagen-like domain maps to 45-103 (SPGPKGDDGERGDTGEEGKDGKVGRQGPKGVKGELGDMGAQGNIGKSGPIGKKGDKGEK). The segment covering 49 to 67 (KGDDGERGDTGEEGKDGKV) has biased composition (basic and acidic residues). Residues 155–271 (TEEKFYYIVQ…CHLTMYFVCE (117 aa)) form the C-type lectin domain. 2 disulfide bridges follow: Cys176-Cys270 and Cys248-Cys262. N-linked (GlcNAc...) asparagine glycosylation occurs at Asn258.

The protein belongs to the COLEC10/COLEC11 family. Expressed mainly in the liver and stomach, but also in muscles, testes, and intestines.

The protein localises to the secreted. The protein resides in the golgi apparatus. It is found in the cytoplasm. Functionally, lectin that binds to various sugars: galactose &gt; mannose = fucose &gt; N-acetylglucosamine &gt; N-acetylgalactosamine. Acts as a chemoattractant, probably involved in the regulation of cell migration. The polypeptide is Collectin-10 (Colec10) (Mus musculus (Mouse)).